Consider the following 628-residue polypeptide: 3-hydroxy-3-methylglutaryl-coenzyme A reductase 2 (628 aa).

Helical transmembrane passes span 38 to 58 (PLYLTNAVFFTLFFTVVYFLL) and 78 to 98 (EIVAIFAFVASLIYLLGFFGI). Residues 99 to 212 (DFVQSLIIRP…HEKTVIVTTE (114 aa)) form a linker region. Asn-153 carries N-linked (GlcNAc...) asparagine glycosylation. Positions 213-628 (EDEEIIKSVV…SSKDMSNLSS (416 aa)) are catalytic. Glu-307 functions as the Charge relay system in the catalytic mechanism. Residue Asn-371 is glycosylated (N-linked (GlcNAc...) asparagine). The active-site Charge relay system is Lys-439. Asn-484 carries N-linked (GlcNAc...) asparagine glycosylation. The active-site Charge relay system is Asp-515. His-613 acts as the Proton donor in catalysis. Residues Asn-617 and Asn-625 are each glycosylated (N-linked (GlcNAc...) asparagine).

It belongs to the HMG-CoA reductase family.

It is found in the endoplasmic reticulum membrane. Its subcellular location is the mitochondrion membrane. It localises to the plastid membrane. It carries out the reaction (R)-mevalonate + 2 NADP(+) + CoA = (3S)-3-hydroxy-3-methylglutaryl-CoA + 2 NADPH + 2 H(+). It functions in the pathway metabolic intermediate biosynthesis; (R)-mevalonate biosynthesis; (R)-mevalonate from acetyl-CoA: step 3/3. Functionally, catalyzes the synthesis of mevalonate. The specific precursor of all isoprenoid compounds present in plants. The polypeptide is 3-hydroxy-3-methylglutaryl-coenzyme A reductase 2 (HMG2) (Gossypium hirsutum (Upland cotton)).